The primary structure comprises 337 residues: m7GpppX diphosphatase (337 aa).

Positions 1-37 (MADTAPQPSKRKRERDPEEAEAPSTEEKEARVGNGTS) are disordered. The residue at position 2 (Ala2) is an N-acetylalanine. The nuclear localization signal (NLS) motif lies at 10–13 (KRKR). Ser24 and Ser101 each carry phosphoserine. Residues Lys138 and Lys142 each carry the N6-acetyllysine modification. The short motif at 142–154 (KYLHQDLHLVRET) is the nuclear export sequence (NES) element. Residues Trp175, Glu185, Asp205, Lys207, and 268-279 (HYLPSYYHLHVH) each bind substrate. Residues 275–279 (HLHVH) carry the Histidine triad motif motif. The active-site Nucleophile is the His277.

It belongs to the HIT family. In terms of assembly, homodimer. Associates with components of the exosome multienzyme ribonuclease complex, such as EXOSC3 and EXOSC4. Interacts with NDOR1.

Its subcellular location is the cytoplasm. The protein resides in the nucleus. It carries out the reaction a 5'-end (N(7)-methyl 5'-triphosphoguanosine)-ribonucleoside in mRNA + H2O = N(7)-methyl-GMP + a 5'-end diphospho-ribonucleoside in mRNA + 2 H(+). The hydrolytic product 7-methylguanosine diphosphate (m7GDP) efficiently inhibits the decapping scavenger activity and acts as a competitive inhibitor in vitro. Inhibited by 2,4-diaminoquinazoline. In terms of biological role, decapping scavenger enzyme that catalyzes the cleavage of a residual cap structure following the degradation of mRNAs by the 3'-&gt;5' exosome-mediated mRNA decay pathway. Hydrolyzes cap analog structures like 7-methylguanosine nucleoside triphosphate (m7GpppG) with up to 10 nucleotide substrates (small capped oligoribonucleotides) and specifically releases 5'-phosphorylated RNA fragments and 7-methylguanosine monophosphate (m7GMP). Cleaves cap analog structures like tri-methyl guanosine nucleoside triphosphate (m3(2,2,7)GpppG) with very poor efficiency. Does not hydrolyze unmethylated cap analog (GpppG) and shows no decapping activity on intact m7GpppG-capped mRNA molecules longer than 25 nucleotides. Does not hydrolyze 7-methylguanosine diphosphate (m7GDP) to m7GMP. May also play a role in the 5'-&gt;3 mRNA decay pathway; m7GDP, the downstream product released by the 5'-&gt;3' mRNA mediated decapping activity, may be also converted by DCPS to m7GMP. Binds to m7GpppG and strongly to m7GDP. Plays a role in first intron splicing of pre-mRNAs. Inhibits activation-induced cell death. This chain is m7GpppX diphosphatase (DCPS), found in Sus scrofa (Pig).